The sequence spans 416 residues: Tyrosine permease (416 aa).

Helical transmembrane passes span 13–33, 34–54, 86–106, 127–147, 153–173, 192–212, 231–251, 260–280, 286–306, 337–357, and 389–409; these read GTML…PIAM, AGIW…MMLL, VVVG…YISG, LSVI…SLLV, VLII…IWHV, LPYI…HGNV, IFIG…VTMG, PIIA…GLFT, LILT…ATLG, VVCF…GLAF, and ILNL…LDVF.

This sequence belongs to the amino acid/polyamine transporter 2 family. Mtr/TnaB/TyrP permease subfamily.

The protein resides in the cell inner membrane. This is Tyrosine permease (tutB) from Enterobacter agglomerans (Erwinia herbicola).